The sequence spans 1142 residues: Probable serine/threonine-protein kinase fhkB (1142 aa).

Positions 1-16 (MSQDIQTQNSYSDELY) are enriched in polar residues. 3 disordered regions span residues 1–359 (MSQD…RLSQ), 374–404 (NTHTNQLGQSSQQTNSPNVHFNSLQQKKKQQ), and 432–451 (QIIGSQSSQSSQLPPTQPPV). 2 stretches are compositionally biased toward low complexity: residues 17 to 72 (SSQI…FSQN) and 83 to 157 (QNSY…PSSQ). The segment covering 158 to 178 (KRFFQSQNDDFVPSSQVTSLQ) has biased composition (polar residues). Residues 186–302 (IQQQQQQQQQ…DYEQENDDDD (117 aa)) are a coiled coil. Residues 187–260 (QQQQQQQQQQ…QQTQQQQQQP (74 aa)) are compositionally biased toward low complexity. 2 stretches are compositionally biased toward acidic residues: residues 261 to 277 (QEDDDDYDDYDGYDNYE) and 283 to 325 (EGEE…EEES). Low complexity predominate over residues 333 to 348 (RALQSRSSQSRPLLRS). Residues 374–397 (NTHTNQLGQSSQQTNSPNVHFNSL) are compositionally biased toward polar residues. Positions 393–434 (HFNSLQQKKKQQQQQQQQQQQQQQQQQQQQQQQQQQQSQQII) form a coiled coil. A compositionally biased stretch (low complexity) spans 432-443 (QIIGSQSSQSSQ). Positions 480–551 (IVVGRSSSCD…NGSYINGELI (72 aa)) constitute an FHA domain. The 261-residue stretch at 625 to 885 (YYFVKEIGSG…IKEALNHPWF (261 aa)) folds into the Protein kinase domain. ATP contacts are provided by residues 631 to 639 (IGSGGYGIV) and lysine 654. The active-site Proton acceptor is the aspartate 747. The disordered stretch occupies residues 947–1142 (FDNNNNNNNN…HQQYTQHTTM (196 aa)). Residues 949–1034 (NNNNNNNNNN…HNHNLNNHNH (86 aa)) show a composition bias toward low complexity. Positions 1035 to 1067 (NNNHHHNHNHNHNHNHNHNHNHNHNHNHNHNHN) are enriched in basic residues. A compositionally biased stretch (low complexity) spans 1068–1133 (NHNNNNNNNN…NNINNNNNYH (66 aa)). Positions 1090–1132 (NNNNNNNNNNNNNNNNNNNNYYNNNINNINNNINNNINNNNNY) form a coiled coil.

It belongs to the protein kinase superfamily. CAMK Ser/Thr protein kinase family. CHK2 subfamily.

The catalysed reaction is L-seryl-[protein] + ATP = O-phospho-L-seryl-[protein] + ADP + H(+). It catalyses the reaction L-threonyl-[protein] + ATP = O-phospho-L-threonyl-[protein] + ADP + H(+). In Dictyostelium discoideum (Social amoeba), this protein is Probable serine/threonine-protein kinase fhkB (fhkB).